Reading from the N-terminus, the 599-residue chain is MQTQSPFGPLLGISSSLLPSPVTVAAAAAAANGHQGPVSLTTFPSAFAAFASQIRNNQLQSLLQSQIQALNGGMGSPGNGPGTPLSRNNYAHHHQQHQNQQHVGKIRGTTEYPLRKRVGGSTVKTAKVWRYFDELPTIEQAAECRICRKKIKATNSSTTGMIRHLRSCHVQEYQLVQEARQNSMIVKMEEKARAKLLREMNEKVITNGIENTPIVKKESQTESQKSPSASSSASDTASSASSSHFSTNPLIGLPAPVAIKPPAPPTPSNSILNLSQSQNQCQNQNPMFQSQNIKNEPTDVEEEDLEQKRSRDILHRPSDLGTKMFFSSPRTFNLTSAFSSITPLEDHKFQKKIEDDHKIHMQIALMLLLDQQPCQIIDRPGIRSLFKFVLPEYHMPSGDVFQATIVPQLLNQMKQQIEALVHNSSSLSSIPDQVMTSSSATSSYEDVSVNESQMAGPNVGDEEEEIMEEEVEEDENVEIEDDTSSASSSIDTDTCDAMASFIHFIGNDAFPHDELISLLSVVTNLFTYFSTRPHVQTHLQMTIIQPTSQPLVQQVQFVTSNLSIISDYIRQTPDMQLLPLAVNQEAMLEKLVDHIDQLV.

The disordered stretch occupies residues 70–104 (LNGGMGSPGNGPGTPLSRNNYAHHHQQHQNQQHVG). A compositionally biased stretch (gly residues) spans 72–81 (GGMGSPGNGP). Residues 123–176 (VKTAKVWRYFDELPTIEQAAECRICRKKIKATNSSTTGMIRHLRSCHVQEYQLV) form a BED-type zinc finger. Residues C144, C147, H164, and H169 each coordinate Zn(2+). Disordered regions lie at residues 208 to 283 (GIEN…QCQN) and 440 to 491 (ATSS…SSID). Composition is skewed to low complexity over residues 223–246 (SQKSPSASSSASDTASSASSSHFS) and 268–283 (SNSILNLSQSQNQCQN). The span at 440–455 (ATSSYEDVSVNESQMA) shows a compositional bias: polar residues. Residues 460 to 483 (GDEEEEIMEEEVEEDENVEIEDDT) show a composition bias toward acidic residues.

Expressed in neuronal cell bodies in the ventral cord and HSN neurons.

It is found in the nucleus. Functionally, probable transcription factor. Involved in vulval organogenesis. During vulval development, may play a role in the regulation of cell cycle regulators such as cul-1. Positively modulates expression of homeobox protein lin-39, perhaps by binding to regulatory regions of the lin-39 gene, acting in the vulval lineage. Plays a role in larval molting. This Caenorhabditis elegans protein is Zinc finger BED domain-containing protein 3.